The sequence spans 185 residues: Ribosome-recycling factor (185 aa).

It belongs to the RRF family.

Its subcellular location is the cytoplasm. Functionally, responsible for the release of ribosomes from messenger RNA at the termination of protein biosynthesis. May increase the efficiency of translation by recycling ribosomes from one round of translation to another. This is Ribosome-recycling factor from Pseudomonas syringae pv. tomato (strain ATCC BAA-871 / DC3000).